The following is a 572-amino-acid chain: MTFRDLLSVSFEGPRPDSSAGGSSAGGGGGSAGGAAPSEGPAVGGVPGGAGGGGGVVGAGSGEDNRSSAGEPGSAGAGGDVNGTAAVGGLVVSAQGVGVGVFLAAFILMAVAGNLLVILSVACNRHLQTVTNYFIVNLAVADLLLSATVLPFSATMEVLGFWAFGRAFCDVWAAVDVLCCTASILSLCTISVDRYVGVRHSLKYPAIMTERKAAAILALLWVVALVVSVGPLLGWKEPVPPDERFCGITEEAGYAVFSSVCSFYLPMAVIVVMYCRVYVVARSTTRSLEAGVKRERGKASEVVLRIHCRGAATGADGAHGMRSAKGHTFRSSLSVRLLKFSREKKAAKTLAIVVGVFVLCWFPFFFVLPLGSLFPQLKPSEGVFKVIFWLGYFNSCVNPLIYPCSSREFKRAFLRLLRCQCRRRRRRRPLWRVYGHHWRASTSGLRQDCAPSSGDAPPGAPLALTALPDPDPEPPGTPEMQAPVASRRKPPSAFREWRLLGPFRRPTTQLRAKVSSLSHKIRAGGAQRAEAACAQRSEVEAVSLGVPHEVAEGATCQAYELADYSNLRETDI.

The disordered stretch occupies residues 1–77; sequence MTFRDLLSVS…SAGEPGSAGA (77 aa). The Extracellular segment spans residues 1–95; it reads MTFRDLLSVS…AVGGLVVSAQ (95 aa). 2 stretches are compositionally biased toward gly residues: residues 23-33 and 42-61; these read SSAGGGGGSAG and AVGG…GAGS. Asn-65 and Asn-82 each carry an N-linked (GlcNAc...) asparagine glycan. Residues 96–121 traverse the membrane as a helical segment; the sequence is GVGVGVFLAAFILMAVAGNLLVILSV. Over 122-133 the chain is Cytoplasmic; the sequence is ACNRHLQTVTNY. A helical membrane pass occupies residues 134–159; sequence FIVNLAVADLLLSATVLPFSATMEVL. The Extracellular segment spans residues 160 to 169; sequence GFWAFGRAFC. The helical transmembrane segment at 170–192 threads the bilayer; the sequence is DVWAAVDVLCCTASILSLCTISV. The Cytoplasmic segment spans residues 193–213; that stretch reads DRYVGVRHSLKYPAIMTERKA. Residues 214-238 traverse the membrane as a helical segment; it reads AAILALLWVVALVVSVGPLLGWKEP. At 239-251 the chain is on the extracellular side; it reads VPPDERFCGITEE. A helical transmembrane segment spans residues 252-275; that stretch reads AGYAVFSSVCSFYLPMAVIVVMYC. At 276 to 348 the chain is on the cytoplasmic side; sequence RVYVVARSTT…KFSREKKAAK (73 aa). A helical transmembrane segment spans residues 349-373; the sequence is TLAIVVGVFVLCWFPFFFVLPLGSL. Topologically, residues 374-380 are extracellular; sequence FPQLKPS. A helical membrane pass occupies residues 381-405; it reads EGVFKVIFWLGYFNSCVNPLIYPCS. Over 406–572 the chain is Cytoplasmic; the sequence is SREFKRAFLR…DYSNLRETDI (167 aa). A lipid anchor (S-palmitoyl cysteine) is attached at Cys-419. Positions 444–488 are disordered; the sequence is GLRQDCAPSSGDAPPGAPLALTALPDPDPEPPGTPEMQAPVASRR. The segment covering 450 to 468 has biased composition (low complexity); sequence APSSGDAPPGAPLALTALP.

The protein belongs to the G-protein coupled receptor 1 family. Adrenergic receptor subfamily. ADRA1D sub-subfamily. As to quaternary structure, interacts with FLNA (via filamin repeat 21); increases PKA-mediated phosphorylation of FLNA. Post-translationally, palmitoylated. Palmitoylation by ZDHHC21 may increase the expression of the receptor and regulate downstream signaling.

Its subcellular location is the cell membrane. Functionally, this alpha-adrenergic receptor mediates its effect through the influx of extracellular calcium. The protein is Alpha-1D adrenergic receptor (ADRA1D) of Homo sapiens (Human).